Here is a 385-residue protein sequence, read N- to C-terminus: MNTEFTLTQKRALAILTLIALLFGAYFLRNYFVLIVVAAVGAYLFTPLFKWFTKRFNTGLSAACTLLSALAAVVVPVGALVGLAIVQIARMVDSVADWVRTTDLSTLGDKILQFVNGLFDRVPFLHITVTADALRKAMISVAQNVGEWLLHFLRDAAGSLAGVITSAIIFVYVFVALLVNREKLRTLIGQLNPLGEDVTDLYLQKMGSMVRGTVNGQFVIAACQGVAGAASIYIAGFHHGFFIFAIVLTALSIIPLGGGIVTIPFGIGMIFYGNIAGGIFVLLWHLLVVTNIDNVLRPILVPRDARLNSALMLLSVFAGITMFGPWGIIIGPVLMILIVTTIDVYLAVYKGVELEQFEAPPVRRRWLPRRGPATSRNAPPPSTAE.

8 helical membrane passes run 7–27, 32–52, 66–86, 159–179, 218–238, 241–261, 263–283, and 319–339; these read LTQK…GAYF, FVLI…FKWF, LLSA…LAIV, SLAG…ALLV, FVIA…AGFH, FFIF…GGIV, IPFG…FVLL, and GITM…ILIV.

This sequence belongs to the autoinducer-2 exporter (AI-2E) (TC 2.A.86) family.

Its subcellular location is the cell membrane. The sequence is that of Putative transport protein MT1133 from Mycobacterium tuberculosis (strain CDC 1551 / Oshkosh).